A 188-amino-acid chain; its full sequence is MASWLPETLFETVGQGPPPSKDYYQLLVTRSQVIYRWWKISLRSEYRSTKPGEAKETHEDFLENSHLQGQTALIFGARILDYVINLCKGKFDFLERLSDDLLLNIISYLDLEDIARLCQTSHRFAKLCMSDKLWEQIVQSTCDTITPDVRALAEDTGWRQLFFTNKLQLQRQLRKRKQKYGNLREKQP.

An F-box domain is found at 91-137 (FDFLERLSDDLLLNIISYLDLEDIARLCQTSHRFAKLCMSDKLWEQI).

In terms of assembly, directly interacts with SKP1 and CUL1.

Functionally, substrate-recognition component of the SCF (SKP1-CUL1-F-box protein)-type E3 ubiquitin ligase complex. The sequence is that of F-box only protein 36 (FBXO36) from Pongo abelii (Sumatran orangutan).